The chain runs to 249 residues: Aspartate/glutamate leucyltransferase (249 aa).

Belongs to the R-transferase family. Bpt subfamily.

It is found in the cytoplasm. It carries out the reaction N-terminal L-glutamyl-[protein] + L-leucyl-tRNA(Leu) = N-terminal L-leucyl-L-glutamyl-[protein] + tRNA(Leu) + H(+). It catalyses the reaction N-terminal L-aspartyl-[protein] + L-leucyl-tRNA(Leu) = N-terminal L-leucyl-L-aspartyl-[protein] + tRNA(Leu) + H(+). Functions in the N-end rule pathway of protein degradation where it conjugates Leu from its aminoacyl-tRNA to the N-termini of proteins containing an N-terminal aspartate or glutamate. The protein is Aspartate/glutamate leucyltransferase of Azorhizobium caulinodans (strain ATCC 43989 / DSM 5975 / JCM 20966 / LMG 6465 / NBRC 14845 / NCIMB 13405 / ORS 571).